A 433-amino-acid polypeptide reads, in one-letter code: Steroid hormone receptor ERR2 (433 aa).

Residues 1-41 (MSSEDRHLGSSCGSFIKTEPSSPSSGIDALSHHSPSGSSDA) form a disordered region. Residues 32 to 41 (HHSPSGSSDA) are compositionally biased toward low complexity. The interaction with NANOG stretch occupies residues 93-211 (YMLNAIPKRL…SPPAKKPLTK (119 aa)). Positions 100–186 (KRLCLVCGDI…RVRGGRQKYK (87 aa)) form a DNA-binding region, nuclear receptor. NR C4-type zinc fingers lie at residues 103–123 (CLVC…CEAC) and 139–163 (CPAT…FMKC). Residues 203-433 (PPAKKPLTKI…LFLEMLEAKV (231 aa)) form an essential for ESRRB transcriptional activity and interaction with NCOA3 region. Residues 208–432 (PLTKIVSYLL…KLFLEMLEAK (225 aa)) enclose the NR LBD domain.

Belongs to the nuclear hormone receptor family. NR3 subfamily. As to quaternary structure, binds DNA as a monomer. Interacts with NR0B1; represses ESRRB activity at the GATA6 promoter. Interacts with NANOG; reciprocally modulates their transcriptional activities and activates POU5F1 expression. Interacts with NCOA3; mediates the interaction between ESRRB and RNA polymerase II complexes and allows NCOA3 corecruitment to ESRRB, KLF4, NANOG, and SOX2 enhancer regions to trigger ESRRB-dependent gene activation involved in self-renewal and pluripotency. Interacts with KDM1A; co-occupes the core set of ESRRB targets including ELF5 and EOMES. Interacts with the multiprotein complex Integrator, at least composed of INTS1, INTS2, INTS3, INTS4, INTS5, INTS6, INTS7, INTS8, INTS9/RC74, INTS10, INTS11/CPSF3L and INTS12; ESRRB is probably not a core component of the integrator complex and associates to integrator via its interaction with INTS1 and INTS9; attracts the transcriptional machinery. Interacts with JARID2. Interacts with POU5F1; recruits ESRRB near the POU5F1-SOX2 element in the NANOG proximal promoter leading to activation of NANOG expression; the interaction is DNA independent. In terms of processing, acetylated by PCAF/KAT2 (in vitro).

It is found in the nucleus. The protein resides in the cytoplasm. Its subcellular location is the chromosome. Its function is as follows. Transcription factor that binds a canonical ESRRB recognition (ERRE) sequence 5'TCAAGGTCA-3' localized on promoter and enhancer of targets genes regulating their expression or their transcription activity. Plays a role, in a LIF independent manner, in maintainance of self-renewal and pluripotency of embryonic and trophoblast stem cells through different signaling pathways including FGF signaling pathway and Wnt signaling pathways. Involved in morula development (2-16 cells embryos) by acting as a regulator at the 8-cell stage. Upon FGF signaling pathway activation, interacts with KDM1A by directly binding to enhancer site of ELF5 and EOMES and activating their transcription leading to self-renewal of trophoblast stem cells. Also regulates expression of multiple rod-specific genes and is required for survival of this cell type. Plays a role as transcription factor activator of GATA6, NR0B1, POU5F1 and PERM1. Plays a role as transcription factor repressor of NFE2L2 transcriptional activity and ESR1 transcriptional activity. During mitosis remains bound to a subset of interphase target genes, including pluripotency regulators, through the canonical ESRRB recognition (ERRE) sequence, leading to their transcriptional activation in early G1 phase. Can coassemble on structured DNA elements with other transcription factors like SOX2, POU5F1, KDM1A and NCOA3 to trigger ESRRB-dependent gene activation. This mechanism, in the case of SOX2 corecruitment prevents the embryonic stem cells (ESCs) to epiblast stem cells (EpiSC) transition through positive regulation of NR0B1 that inhibits the EpiSC transcriptional program. Also plays a role inner ear development by controlling expression of ion channels and transporters and in early placentation. The chain is Steroid hormone receptor ERR2 from Rattus norvegicus (Rat).